The following is a 319-amino-acid chain: L-lactate dehydrogenase (319 aa).

Residues valine 11, aspartate 32, arginine 37, tyrosine 62, and 76–77 (GV) each bind NAD(+). Substrate contacts are provided by residues glutamine 79, arginine 85, and 117–120 (NPVD). Residues 115–117 (VTN) and serine 140 each bind NAD(+). Substrate is bound at residue 145–148 (DTAR). Beta-D-fructose 1,6-bisphosphate is bound by residues arginine 150 and histidine 165. The active-site Proton acceptor is the histidine 172. Tyrosine 217 carries the phosphotyrosine modification. Residue threonine 226 participates in substrate binding.

Belongs to the LDH/MDH superfamily. LDH family. As to quaternary structure, homotetramer.

Its subcellular location is the cytoplasm. It carries out the reaction (S)-lactate + NAD(+) = pyruvate + NADH + H(+). It participates in fermentation; pyruvate fermentation to lactate; (S)-lactate from pyruvate: step 1/1. Allosterically activated by fructose 1,6-bisphosphate (FBP). Functionally, catalyzes the conversion of lactate to pyruvate. The sequence is that of L-lactate dehydrogenase from Thermotoga sp. (strain RQ2).